The chain runs to 557 residues: Probable WRKY transcription factor 20 (557 aa).

Over residues 1–12 (MNPQANDRKEFQ) the composition is skewed to basic and acidic residues. Disordered regions lie at residues 1 to 36 (MNPQANDRKEFQGDCSATGDLTAKHDSAGGNGGGGA) and 76 to 215 (KPEP…DGYN). A compositionally biased stretch (polar residues) spans 95–114 (SASSSSYTGRGFHQNTFTEQ). Residues 151–169 (SSHSPSSISDAAGSSSELS) show a composition bias toward low complexity. Positions 193-207 (SIQTSQNDSRGSTPS) are enriched in polar residues. The WRKY 1 DNA-binding region spans 205–269 (TPSILADDGY…YKGTHDHPKP (65 aa)). Residues cysteine 236, cysteine 241, histidine 264, and histidine 266 each coordinate Zn(2+). The disordered stretch occupies residues 257–348 (DIIYKGTHDH…PDDDDPFSKR (92 aa)). The span at 282-299 (QEERLDKYPSSTGRDEKG) shows a compositional bias: basic and acidic residues. Polar residues predominate over residues 303–314 (YNLSNPNEQTGN). The segment covering 321–332 (SASDDGGEAAAS) has biased composition (low complexity). Residues 375–440 (SEVDILDDGY…YEGKHDHDVP (66 aa)) constitute a DNA-binding region (WRKY 2). 4 residues coordinate Zn(2+): cysteine 406, cysteine 411, histidine 435, and histidine 437. Disordered regions lie at residues 433–486 (GKHD…QHQN) and 520–557 (NQYGQRETKNETQNGDISSLNNSSYPYPPNMGRVQSGP). Residues 520-536 (NQYGQRETKNETQNGDI) show a composition bias toward polar residues.

The protein belongs to the WRKY group I family.

It localises to the nucleus. In terms of biological role, transcription factor. Interacts specifically with the W box (5'-(T)TGAC[CT]-3'), a frequently occurring elicitor-responsive cis-acting element. The chain is Probable WRKY transcription factor 20 (WRKY20) from Arabidopsis thaliana (Mouse-ear cress).